Consider the following 303-residue polypeptide: Major fimbrium anchoring subunit FimB (303 aa).

Residues M1 to G22 form the signal peptide. Residue C23 is the site of N-palmitoyl cysteine attachment. Residue C23 is the site of S-diacylglycerol cysteine attachment.

Belongs to the bacteroidetes fimbrillin superfamily. FimB/Mfa2 family. In terms of assembly, fimB is not part of the fimbrium itself, but anchors the fimbrium in the outer membrane. Linear, head-to-tail oligomerization of fimbrial subunits mediates assembly of the fimbrium stalk, while the minor components FimC, FimD and FimE probably form the fimbrium tip. The anchoring subunit FimB limits fimbrium length and is important for solid fimbrium attachment to the outer membrane. In its absence, the major fimbriae become very long and are easily detached from the membrane.

Its subcellular location is the cell outer membrane. Functionally, anchoring subunit of the major fimbriae. Regulates fimbrial length. These filamentous pili are attached to the cell surface; they mediate biofilm formation, adhesion onto host cells and onto other bacteria that are part of the oral microbiome. Fimbriae of P.gingivalis are major virulence factors. The polypeptide is Major fimbrium anchoring subunit FimB (Porphyromonas gingivalis (strain ATCC BAA-308 / W83)).